Reading from the N-terminus, the 259-residue chain is NAD kinase (259 aa).

D43 acts as the Proton acceptor in catalysis. NAD(+) is bound by residues 43–44, 111–112, and R136; these read DG and NE.

It belongs to the NAD kinase family. It depends on a divalent metal cation as a cofactor.

It is found in the cytoplasm. It carries out the reaction NAD(+) + ATP = ADP + NADP(+) + H(+). Functionally, involved in the regulation of the intracellular balance of NAD and NADP, and is a key enzyme in the biosynthesis of NADP. Catalyzes specifically the phosphorylation on 2'-hydroxyl of the adenosine moiety of NAD to yield NADP. The sequence is that of NAD kinase from Mycoplasma genitalium (strain ATCC 33530 / DSM 19775 / NCTC 10195 / G37) (Mycoplasmoides genitalium).